A 702-amino-acid chain; its full sequence is Elongation factor G (702 aa).

One can recognise a tr-type G domain in the interval 8 to 290 (ERYRNIGISA…AVIEYLPAPT (283 aa)). GTP-binding positions include 17 to 24 (AHIDAGKT), 88 to 92 (DTPGH), and 142 to 145 (NKMD).

Belongs to the TRAFAC class translation factor GTPase superfamily. Classic translation factor GTPase family. EF-G/EF-2 subfamily.

The protein resides in the cytoplasm. Functionally, catalyzes the GTP-dependent ribosomal translocation step during translation elongation. During this step, the ribosome changes from the pre-translocational (PRE) to the post-translocational (POST) state as the newly formed A-site-bound peptidyl-tRNA and P-site-bound deacylated tRNA move to the P and E sites, respectively. Catalyzes the coordinated movement of the two tRNA molecules, the mRNA and conformational changes in the ribosome. The polypeptide is Elongation factor G (Yersinia pseudotuberculosis serotype O:1b (strain IP 31758)).